The following is a 319-amino-acid chain: Thioredoxin reductase (319 aa).

FAD contacts are provided by residues 11–14 (SGPA), 40–41 (IA), Gln45, Asn54, Cys145, Asp288, and 295–297 (RQA). An intrachain disulfide couples Cys142 to Cys145.

The protein belongs to the class-II pyridine nucleotide-disulfide oxidoreductase family. As to quaternary structure, homodimer. Requires FAD as cofactor.

The protein localises to the cytoplasm. The enzyme catalyses [thioredoxin]-dithiol + NADP(+) = [thioredoxin]-disulfide + NADPH + H(+). The sequence is that of Thioredoxin reductase (TRR1) from Candida glabrata (strain ATCC 2001 / BCRC 20586 / JCM 3761 / NBRC 0622 / NRRL Y-65 / CBS 138) (Yeast).